Reading from the N-terminus, the 337-residue chain is Glyceraldehyde-3-phosphate dehydrogenase 1, cytosolic (337 aa).

Residues 13–14, aspartate 35, and arginine 82 contribute to the NAD(+) site; that span reads RI. Residues 153–155, threonine 184, 213–214, and arginine 236 each bind D-glyceraldehyde 3-phosphate; these read SCT and TG. Residue cysteine 154 is the Nucleophile of the active site. Asparagine 318 contributes to the NAD(+) binding site.

This sequence belongs to the glyceraldehyde-3-phosphate dehydrogenase family. As to quaternary structure, homotetramer.

It is found in the cytoplasm. It carries out the reaction D-glyceraldehyde 3-phosphate + phosphate + NAD(+) = (2R)-3-phospho-glyceroyl phosphate + NADH + H(+). It functions in the pathway carbohydrate degradation; glycolysis; pyruvate from D-glyceraldehyde 3-phosphate: step 1/5. Functionally, key enzyme in glycolysis that catalyzes the first step of the pathway by converting D-glyceraldehyde 3-phosphate (G3P) into 3-phospho-D-glyceroyl phosphate. Essential for the maintenance of cellular ATP levels and carbohydrate metabolism. In Hordeum vulgare (Barley), this protein is Glyceraldehyde-3-phosphate dehydrogenase 1, cytosolic (GAPC).